Consider the following 247-residue polypeptide: tRNA pseudouridine synthase A (247 aa).

Asp52 (nucleophile) is an active-site residue. Tyr113 contributes to the substrate binding site.

This sequence belongs to the tRNA pseudouridine synthase TruA family. As to quaternary structure, homodimer.

The catalysed reaction is uridine(38/39/40) in tRNA = pseudouridine(38/39/40) in tRNA. In terms of biological role, formation of pseudouridine at positions 38, 39 and 40 in the anticodon stem and loop of transfer RNAs. The sequence is that of tRNA pseudouridine synthase A from Sinorhizobium fredii (strain NBRC 101917 / NGR234).